The following is a 517-amino-acid chain: Cytochrome b mRNA maturase bI3 (517 aa).

Residues 1–31 are Mitochondrial matrix-facing; that stretch reads MAFRKSNVYLSLVNSYIIDSPQPSSINYWWN. The cytochrome b stretch occupies residues 1–169; sequence MAFRKSNVYL…DIVSWLWGGF (169 aa). Residues 32–52 form a helical membrane-spanning segment; it reads MGSLLGLCLVIQIVTGIFMAM. The Mitochondrial intermembrane segment spans residues 53 to 84; that stretch reads HYSSNIELAFSSVEHIMRDVHNGYILRYLHAN. The chain crosses the membrane as a helical span at residues 85–105; the sequence is GASFFFMVMFMHMAKGLYYGS. At 106–115 the chain is on the mitochondrial matrix side; that stretch reads YRSPRVTLWN. A helical membrane pass occupies residues 116-136; it reads VGVIIFILTIATAFLGYCCVY. Residues 137–145 are Mitochondrial intermembrane-facing; that stretch reads GQMSHWGAT. Residues 146–166 form a helical membrane-spanning segment; it reads VITNLFSAIPFVGNDIVSWLW. Topologically, residues 167–184 are mitochondrial matrix; sequence GGFNMEDPYYSNMMLNKS. The segment at 170 to 517 is maturase; sequence NMEDPYYSNM…NNYFKIPPKY (348 aa). Residues 185-205 form a helical membrane-spanning segment; the sequence is VLCWNIFIWMMNYYIIQLIIY. Residues 206–224 lie on the Mitochondrial intermembrane side of the membrane; sequence NNMIWNKNNMVKMFIMRRK. The chain crosses the membrane as a helical span at residues 225-242; sequence LAVINMYMYMKLIIQRTY. Residues 243-517 lie on the Mitochondrial matrix side of the membrane; it reads SYYMNNTIIY…NNYFKIPPKY (275 aa).

In the N-terminal section; belongs to the cytochrome b family. This sequence in the C-terminal section; belongs to the LAGLIDADG endonuclease family. Forms a ribonucleoprotein complex composed of maturase bI3 and 2 dimers of MRS1 that assemble around the bI3 RNA.

The protein resides in the mitochondrion inner membrane. Its function is as follows. Mitochondrial mRNA maturase required for splicing of intron 3 of the cytochrome b (COB) gene, containing its own coding sequence. In vivo splicing requires the formation of a ribonucleoprotein complex together with the imported mitochondrial RNA-splicing protein MRS1. The complex seems to stimulate the intrinsic ribozyme activity of intron bI3 through binding to and stabilizing specific secondary and tertiary structure elements in the RNA. The protein is Cytochrome b mRNA maturase bI3 (BI3) of Saccharomyces cerevisiae (strain ATCC 204508 / S288c) (Baker's yeast).